A 428-amino-acid polypeptide reads, in one-letter code: Nocturnin (428 aa).

The transit peptide at 1–72 (MYQSPRRLCS…PMGNGTSRLY (72 aa)) directs the protein to the mitochondrion. Positions 21–66 (RRTLVPGPRRTLAPPVLGSRPASPQLQAAASGAARSRPRTVSPMGN) are disordered. Low complexity predominate over residues 39–55 (SRPASPQLQAAASGAAR). A Mg(2+)-binding site is contributed by E192. Substrate-binding positions include E192, 216-218 (KPW), N260, 283-286 (HLKA), and 321-323 (DFN). The segment at 340–350 (NLNSAYKLLSP) is interaction with PPARG. Substrate is bound at residue H411.

This sequence belongs to the CCR4/nocturin family. Interacts with PPARG. Mg(2+) serves as cofactor.

It is found in the cytoplasm. The protein resides in the nucleus. It localises to the perinuclear region. The protein localises to the mitochondrion. It catalyses the reaction NADP(+) + H2O = phosphate + NAD(+). It carries out the reaction NADPH + H2O = phosphate + NADH. Its function is as follows. Phosphatase which catalyzes the conversion of NADP(+) to NAD(+) and of NADPH to NADH. Shows a small preference for NADPH over NADP(+). Represses translation and promotes degradation of target mRNA molecules. Plays an important role in post-transcriptional regulation of metabolic genes under circadian control. Exerts a rhythmic post-transcriptional control of genes necessary for metabolic functions including nutrient absorption, glucose/insulin sensitivity, lipid metabolism, adipogenesis, inflammation and osteogenesis. Plays an important role in favoring adipogenesis over osteoblastogenesis and acts as a key regulator of the adipogenesis/osteogenesis balance. Promotes adipogenesis by facilitating PPARG nuclear translocation which activates its transcriptional activity. Regulates circadian expression of NOS2 in the liver and negatively regulates the circadian expression of IGF1 in the bone. Critical for proper development of early embryos. The polypeptide is Nocturnin (Rattus norvegicus (Rat)).